We begin with the raw amino-acid sequence, 65 residues long: Large ribosomal subunit protein bL35 (65 aa).

Belongs to the bacterial ribosomal protein bL35 family.

The chain is Large ribosomal subunit protein bL35 from Proteus mirabilis (strain HI4320).